The sequence spans 188 residues: UPF0461 protein C5orf24 (188 aa).

The segment covering 1–10 (MMHPVASSNP) has biased composition (polar residues). The segment at 1 to 20 (MMHPVASSNPAFCGPGKPSC) is disordered. Ser37 carries the post-translational modification Phosphoserine. Lys75 participates in a covalent cross-link: Glycyl lysine isopeptide (Lys-Gly) (interchain with G-Cter in SUMO2). Positions 79 to 142 (KKKKNLNRSG…GYKVSPGRPP (64 aa)) are disordered. The span at 80-92 (KKKNLNRSGKRGR) shows a compositional bias: basic residues. Positions 94-107 (SGTTKSAGYRTSTG) are enriched in polar residues. Phosphoserine occurs at positions 121 and 180. A Glycyl lysine isopeptide (Lys-Gly) (interchain with G-Cter in SUMO2) cross-link involves residue Lys184.

It belongs to the UPF0461 family.

The chain is UPF0461 protein C5orf24 (C5orf24) from Homo sapiens (Human).